Consider the following 40-residue polypeptide: Photosystem II reaction center protein J (40 aa).

The chain crosses the membrane as a helical span at residues 8 to 28 (IPLWLIGTVAGIPVIGSVGVF).

This sequence belongs to the PsbJ family. PSII is composed of 1 copy each of membrane proteins PsbA, PsbB, PsbC, PsbD, PsbE, PsbF, PsbH, PsbI, PsbJ, PsbK, PsbL, PsbM, PsbT, PsbX, PsbY, PsbZ, Psb30/Ycf12, at least 3 peripheral proteins of the oxygen-evolving complex and a large number of cofactors. It forms dimeric complexes.

It localises to the plastid. It is found in the chloroplast thylakoid membrane. One of the components of the core complex of photosystem II (PSII). PSII is a light-driven water:plastoquinone oxidoreductase that uses light energy to abstract electrons from H(2)O, generating O(2) and a proton gradient subsequently used for ATP formation. It consists of a core antenna complex that captures photons, and an electron transfer chain that converts photonic excitation into a charge separation. In Acorus calamus (Sweet flag), this protein is Photosystem II reaction center protein J.